Here is a 103-residue protein sequence, read N- to C-terminus: Ubiquitin-related modifier 1 (103 aa).

At Gly-103 the chain carries 1-thioglycine. A Glycyl lysine isopeptide (Gly-Lys) (interchain with K-? in acceptor proteins) cross-link involves residue Gly-103.

It belongs to the URM1 family. C-terminal thiocarboxylation occurs in 2 steps, it is first acyl-adenylated (-COAMP) via the hesA/moeB/thiF part of UBA4, then thiocarboxylated (-COSH) via the rhodanese domain of UBA4.

It is found in the cytoplasm. It participates in tRNA modification; 5-methoxycarbonylmethyl-2-thiouridine-tRNA biosynthesis. Functionally, acts as a sulfur carrier required for 2-thiolation of mcm(5)S(2)U at tRNA wobble positions of cytosolic tRNA(Lys), tRNA(Glu) and tRNA(Gln). Serves as sulfur donor in tRNA 2-thiolation reaction by being thiocarboxylated (-COSH) at its C-terminus by the MOCS3 homolog UBA4. The sulfur is then transferred to tRNA to form 2-thiolation of mcm(5)S(2)U. Prior mcm(5) tRNA modification by the elongator complex is required for 2-thiolation. Also acts as a ubiquitin-like protein (UBL) that is covalently conjugated via an isopeptide bond to lysine residues of target proteins such as AHP1. The thiocarboxylated form serves as substrate for conjugation and oxidative stress specifically induces the formation of UBL-protein conjugates. This chain is Ubiquitin-related modifier 1, found in Vanderwaltozyma polyspora (strain ATCC 22028 / DSM 70294 / BCRC 21397 / CBS 2163 / NBRC 10782 / NRRL Y-8283 / UCD 57-17) (Kluyveromyces polysporus).